The sequence spans 46 residues: Protein PsbN (46 aa).

Residues 10 to 30 (VAIAVLAALLGLTGFGVYTAF) traverse the membrane as a helical segment.

This sequence belongs to the PsbN family.

Its subcellular location is the cellular thylakoid membrane. Its function is as follows. May play a role in photosystem I and II biogenesis. This is Protein PsbN from Synechococcus sp. (strain WH7803).